The chain runs to 215 residues: Methylthioribulose-1-phosphate dehydratase (215 aa).

Zn(2+) is bound by residues H103 and H105.

Belongs to the aldolase class II family. MtnB subfamily. It depends on Zn(2+) as a cofactor.

It carries out the reaction 5-(methylsulfanyl)-D-ribulose 1-phosphate = 5-methylsulfanyl-2,3-dioxopentyl phosphate + H2O. The protein operates within amino-acid biosynthesis; L-methionine biosynthesis via salvage pathway; L-methionine from S-methyl-5-thio-alpha-D-ribose 1-phosphate: step 2/6. Functionally, catalyzes the dehydration of methylthioribulose-1-phosphate (MTRu-1-P) into 2,3-diketo-5-methylthiopentyl-1-phosphate (DK-MTP-1-P). The chain is Methylthioribulose-1-phosphate dehydratase from Sulfurihydrogenibium sp. (strain YO3AOP1).